Reading from the N-terminus, the 269-residue chain is Glutamate 5-kinase 2 (269 aa).

Lys-16 contacts ATP. Residues Ser-57, Asp-144, and Asn-156 each contribute to the substrate site. 218–224 lines the ATP pocket; that stretch reads SGGMISK.

The protein belongs to the glutamate 5-kinase family.

Its subcellular location is the cytoplasm. It carries out the reaction L-glutamate + ATP = L-glutamyl 5-phosphate + ADP. Its pathway is amino-acid biosynthesis; L-proline biosynthesis; L-glutamate 5-semialdehyde from L-glutamate: step 1/2. In terms of biological role, catalyzes the transfer of a phosphate group to glutamate to form L-glutamate 5-phosphate. The protein is Glutamate 5-kinase 2 of Rhizobium meliloti (strain 1021) (Ensifer meliloti).